A 402-amino-acid chain; its full sequence is Acetylornithine aminotransferase (402 aa).

Pyridoxal 5'-phosphate contacts are provided by residues 106–107 and Phe132; that span reads GA. Position 135 (Arg135) interacts with N(2)-acetyl-L-ornithine. 217 to 220 is a pyridoxal 5'-phosphate binding site; that stretch reads DEVQ. At Lys247 the chain carries N6-(pyridoxal phosphate)lysine. Thr275 lines the N(2)-acetyl-L-ornithine pocket. Residue Thr276 participates in pyridoxal 5'-phosphate binding.

It belongs to the class-III pyridoxal-phosphate-dependent aminotransferase family. ArgD subfamily. As to quaternary structure, homodimer. Pyridoxal 5'-phosphate is required as a cofactor.

The protein localises to the cytoplasm. The enzyme catalyses N(2)-acetyl-L-ornithine + 2-oxoglutarate = N-acetyl-L-glutamate 5-semialdehyde + L-glutamate. Its pathway is amino-acid biosynthesis; L-arginine biosynthesis; N(2)-acetyl-L-ornithine from L-glutamate: step 4/4. In Streptomyces coelicolor (strain ATCC BAA-471 / A3(2) / M145), this protein is Acetylornithine aminotransferase.